A 213-amino-acid chain; its full sequence is Probable transaldolase (213 aa).

The active-site Schiff-base intermediate with substrate is Lys83.

Belongs to the transaldolase family. Type 3B subfamily.

The protein localises to the cytoplasm. The enzyme catalyses D-sedoheptulose 7-phosphate + D-glyceraldehyde 3-phosphate = D-erythrose 4-phosphate + beta-D-fructose 6-phosphate. It participates in carbohydrate degradation; pentose phosphate pathway; D-glyceraldehyde 3-phosphate and beta-D-fructose 6-phosphate from D-ribose 5-phosphate and D-xylulose 5-phosphate (non-oxidative stage): step 2/3. Functionally, transaldolase is important for the balance of metabolites in the pentose-phosphate pathway. The chain is Probable transaldolase from Geobacillus sp. (strain WCH70).